Here is a 139-residue protein sequence, read N- to C-terminus: Large ribosomal subunit protein uL13 (139 aa).

This sequence belongs to the universal ribosomal protein uL13 family. As to quaternary structure, part of the 50S ribosomal subunit.

This protein is one of the early assembly proteins of the 50S ribosomal subunit, although it is not seen to bind rRNA by itself. It is important during the early stages of 50S assembly. This Nitratiruptor sp. (strain SB155-2) protein is Large ribosomal subunit protein uL13.